Consider the following 492-residue polypeptide: Catalase-1 (492 aa).

Residues H65 and N138 contribute to the active site. Y348 is a binding site for heme.

Belongs to the catalase family. In terms of assembly, homotetramer. The cofactor is heme.

Its subcellular location is the peroxisome. The protein localises to the glyoxysome. The enzyme catalyses 2 H2O2 = O2 + 2 H2O. Functionally, occurs in almost all aerobically respiring organisms and serves to protect cells from the toxic effects of hydrogen peroxide. The chain is Catalase-1 (CAT1) from Triticum aestivum (Wheat).